We begin with the raw amino-acid sequence, 408 residues long: Multifunctional CCA protein (408 aa).

ATP contacts are provided by Gly8 and Arg11. CTP-binding residues include Gly8 and Arg11. Residues Asp21 and Asp23 each coordinate Mg(2+). Positions 91, 137, and 140 each coordinate ATP. CTP-binding residues include Arg91, Arg137, and Arg140. Residues Thr228 to Tyr329 enclose the HD domain.

This sequence belongs to the tRNA nucleotidyltransferase/poly(A) polymerase family. Bacterial CCA-adding enzyme type 1 subfamily. Monomer. Can also form homodimers and oligomers. It depends on Mg(2+) as a cofactor. Ni(2+) serves as cofactor.

It carries out the reaction a tRNA precursor + 2 CTP + ATP = a tRNA with a 3' CCA end + 3 diphosphate. It catalyses the reaction a tRNA with a 3' CCA end + 2 CTP + ATP = a tRNA with a 3' CCACCA end + 3 diphosphate. In terms of biological role, catalyzes the addition and repair of the essential 3'-terminal CCA sequence in tRNAs without using a nucleic acid template. Adds these three nucleotides in the order of C, C, and A to the tRNA nucleotide-73, using CTP and ATP as substrates and producing inorganic pyrophosphate. tRNA 3'-terminal CCA addition is required both for tRNA processing and repair. Also involved in tRNA surveillance by mediating tandem CCA addition to generate a CCACCA at the 3' terminus of unstable tRNAs. While stable tRNAs receive only 3'-terminal CCA, unstable tRNAs are marked with CCACCA and rapidly degraded. The sequence is that of Multifunctional CCA protein from Pseudomonas syringae pv. syringae (strain B728a).